A 210-amino-acid polypeptide reads, in one-letter code: Somatotropin (210 aa).

Residues 1-23 (MARALVLLSVVLVSLLVNQGTAS) form the signal peptide. H38 contributes to the Zn(2+) binding site. Residues C71 and C183 are joined by a disulfide bond. Residue E192 coordinates Zn(2+). Cysteines 200 and 208 form a disulfide.

It belongs to the somatotropin/prolactin family.

It localises to the secreted. Functionally, growth hormone plays an important role in growth control. In Ctenopharyngodon idella (Grass carp), this protein is Somatotropin (gh).